The chain runs to 314 residues: Formimidoylglutamase (314 aa).

H127, D153, H155, D157, D245, and D247 together coordinate Mn(2+).

This sequence belongs to the arginase family. Requires Mn(2+) as cofactor.

The catalysed reaction is N-formimidoyl-L-glutamate + H2O = formamide + L-glutamate. Its pathway is amino-acid degradation; L-histidine degradation into L-glutamate; L-glutamate from N-formimidoyl-L-glutamate (hydrolase route): step 1/1. Catalyzes the conversion of N-formimidoyl-L-glutamate to L-glutamate and formamide. This chain is Formimidoylglutamase, found in Aeromonas salmonicida (strain A449).